We begin with the raw amino-acid sequence, 683 residues long: DNA ligase (683 aa).

Residues 44 to 48 (DAEYD), 93 to 94 (SL), and glutamate 127 contribute to the NAD(+) site. Residue lysine 129 is the N6-AMP-lysine intermediate of the active site. Arginine 150, glutamate 187, lysine 302, and lysine 326 together coordinate NAD(+). Positions 420, 423, 438, and 444 each coordinate Zn(2+). Residues 601 to 683 (RVGGRLAGLT…SKLLATGGNQ (83 aa)) form the BRCT domain.

Belongs to the NAD-dependent DNA ligase family. LigA subfamily. The cofactor is Mg(2+). It depends on Mn(2+) as a cofactor.

The catalysed reaction is NAD(+) + (deoxyribonucleotide)n-3'-hydroxyl + 5'-phospho-(deoxyribonucleotide)m = (deoxyribonucleotide)n+m + AMP + beta-nicotinamide D-nucleotide.. Functionally, DNA ligase that catalyzes the formation of phosphodiester linkages between 5'-phosphoryl and 3'-hydroxyl groups in double-stranded DNA using NAD as a coenzyme and as the energy source for the reaction. It is essential for DNA replication and repair of damaged DNA. The sequence is that of DNA ligase from Trichlorobacter lovleyi (strain ATCC BAA-1151 / DSM 17278 / SZ) (Geobacter lovleyi).